The chain runs to 82 residues: Small ribosomal subunit protein bS16 (82 aa).

Belongs to the bacterial ribosomal protein bS16 family.

This Pectobacterium atrosepticum (strain SCRI 1043 / ATCC BAA-672) (Erwinia carotovora subsp. atroseptica) protein is Small ribosomal subunit protein bS16.